A 1260-amino-acid polypeptide reads, in one-letter code: ATP-dependent helicase/deoxyribonuclease subunit B (1260 aa).

Belongs to the helicase family. AddB/RexB type 2 subfamily. As to quaternary structure, heterodimer of AddA and RexB. The cofactor is Mg(2+).

In terms of biological role, the heterodimer acts as both an ATP-dependent DNA helicase and an ATP-dependent, dual-direction single-stranded exonuclease. Recognizes the chi site generating a DNA molecule suitable for the initiation of homologous recombination. This subunit has 5' -&gt; 3' nuclease activity but not helicase activity. The sequence is that of ATP-dependent helicase/deoxyribonuclease subunit B from Limosilactobacillus reuteri (strain DSM 20016) (Lactobacillus reuteri).